The chain runs to 348 residues: tRNA N6-adenosine threonylcarbamoyltransferase (348 aa).

Residues His114 and His118 each coordinate Fe cation. Substrate contacts are provided by residues 137 to 141 (LVSGG), Asp171, Gly184, Asp188, and Asn283. Asp311 provides a ligand contact to Fe cation.

The protein belongs to the KAE1 / TsaD family. The cofactor is Fe(2+).

It is found in the cytoplasm. The enzyme catalyses L-threonylcarbamoyladenylate + adenosine(37) in tRNA = N(6)-L-threonylcarbamoyladenosine(37) in tRNA + AMP + H(+). Required for the formation of a threonylcarbamoyl group on adenosine at position 37 (t(6)A37) in tRNAs that read codons beginning with adenine. Is involved in the transfer of the threonylcarbamoyl moiety of threonylcarbamoyl-AMP (TC-AMP) to the N6 group of A37, together with TsaE and TsaB. TsaD likely plays a direct catalytic role in this reaction. This chain is tRNA N6-adenosine threonylcarbamoyltransferase, found in Nocardioides sp. (strain ATCC BAA-499 / JS614).